The sequence spans 1032 residues: Connector enhancer of kinase suppressor of ras 2 (1032 aa).

Positions 11 to 76 (WSPSQVVDWM…LEAVDLLCAL (66 aa)) constitute an SAM domain. Serine 12 is modified (phosphoserine). The CRIC domain occupies 84 to 178 (NLKTLSHKLN…TIVQQDCTVY (95 aa)). The region spanning 215–297 (VIQLANIKPS…GVILTLKKRP (83 aa)) is the PDZ domain. Residues 324–340 (RSPTSSVATPSSTISTP) show a composition bias toward low complexity. A disordered region spans residues 324-349 (RSPTSSVATPSSTISTPTKRDSSALQ). The DUF1170 domain maps to 332–515 (TPSSTISTPT…PTHYSLLPSL (184 aa)). Phosphoserine occurs at positions 338 and 390. Positions 480-509 (EEYMFQRNSKKDTGKKSKKKGDKSTSPTHY) are disordered. A PH domain is found at 570 to 669 (RGDCEGWLWK…WLNRINMLTA (100 aa)). Residues 682 to 766 (DYWSESDKEE…PIRKTASQRR (85 aa)) are disordered. Tyrosine 683 is modified (phosphotyrosine). Acidic residues predominate over residues 683-693 (YWSESDKEEAD). Phosphoserine is present on residues serine 685 and serine 687. A compositionally biased stretch (pro residues) spans 701–714 (DSPPPPYDTYPRPP). The segment covering 730 to 740 (LSSTETSQSQS) has biased composition (low complexity). A phosphoserine mark is found at serine 756 and serine 767. A disordered region spans residues 866 to 900 (DPQDDIQPPEVEEEEEEEEEEAAGENIGEKNENRE). A coiled-coil region spans residues 874–917 (PEVEEEEEEEEEEAAGENIGEKNENREEKLGDSLQDLYRALEEA). Acidic residues predominate over residues 875 to 888 (EVEEEEEEEEEEAA). Phosphoserine is present on serine 906.

Belongs to the CNKSR family. As to quaternary structure, interacts with RAF1, RAB2L and RAL GTPase proteins. Interacts with DLG4 and AIP1. Post-translationally, phosphorylated on tyrosine. Expressed in neurons and localized in the cell body and neurites.

The protein localises to the cytoplasm. The protein resides in the membrane. Its function is as follows. May function as an adapter protein or regulator of Ras signaling pathways, in synaptic junctions. The polypeptide is Connector enhancer of kinase suppressor of ras 2 (Cnksr2) (Rattus norvegicus (Rat)).